A 139-amino-acid polypeptide reads, in one-letter code: Putative pre-16S rRNA nuclease (139 aa).

Belongs to the YqgF nuclease family.

The protein localises to the cytoplasm. Functionally, could be a nuclease involved in processing of the 5'-end of pre-16S rRNA. This Streptococcus sanguinis (strain SK36) protein is Putative pre-16S rRNA nuclease.